Consider the following 466-residue polypeptide: tRNA-2-methylthio-N(6)-dimethylallyladenosine synthase (466 aa).

Positions 3-123 (KKLYIKTYGC…LPEMVARAVR (121 aa)) constitute an MTTase N-terminal domain. [4Fe-4S] cluster contacts are provided by C12, C48, C86, C162, C166, and C169. Residues 148–381 (SPAGPSAFLS…QQLLTAQQTA (234 aa)) enclose the Radical SAM core domain. In terms of domain architecture, TRAM spans 384–446 (TACVGRVQPV…ANSLSGTVVV (63 aa)).

The protein belongs to the methylthiotransferase family. MiaB subfamily. Monomer. [4Fe-4S] cluster serves as cofactor.

The protein localises to the cytoplasm. It catalyses the reaction N(6)-dimethylallyladenosine(37) in tRNA + (sulfur carrier)-SH + AH2 + 2 S-adenosyl-L-methionine = 2-methylsulfanyl-N(6)-dimethylallyladenosine(37) in tRNA + (sulfur carrier)-H + 5'-deoxyadenosine + L-methionine + A + S-adenosyl-L-homocysteine + 2 H(+). In terms of biological role, catalyzes the methylthiolation of N6-(dimethylallyl)adenosine (i(6)A), leading to the formation of 2-methylthio-N6-(dimethylallyl)adenosine (ms(2)i(6)A) at position 37 in tRNAs that read codons beginning with uridine. The protein is tRNA-2-methylthio-N(6)-dimethylallyladenosine synthase of Rhodospirillum centenum (strain ATCC 51521 / SW).